The following is a 1006-amino-acid chain: DNA polymerase (1006 aa).

It belongs to the DNA polymerase type-B family. As to quaternary structure, interacts with OPG148. Component of the Uracil-DNA glycosylase(UDG)-OPG148-polymerase complex; OPG148 and OPG116/UDG form a heterodimeric processivity factor that associates with OPG071 to form the processive polymerase holoenzyme.

The catalysed reaction is DNA(n) + a 2'-deoxyribonucleoside 5'-triphosphate = DNA(n+1) + diphosphate. Functionally, catalyzes DNA synthesis. Acquires processivity by associating with a heterodimeric processivity factor comprised of the viral OPG148 and OPG116 proteins, thereby forming the DNA polymerase holoenzyme. Displays 3'- to 5' exonuclease activity. Might participate in viral DNA recombination. Does not perform OPG116/D4synthesis across an abasic site. The chain is DNA polymerase (OPG071) from Monkeypox virus.